The sequence spans 699 residues: Tectonic-like complex member Mks1 (699 aa).

Disordered stretches follow at residues 101-121 (RRSPISQHEGEMEKDKNEGEI) and 373-396 (DGFSEEADGEDEQELGDGLPIEED). The segment covering 108-119 (HEGEMEKDKNEG) has biased composition (basic and acidic residues). The C2 B9-type domain maps to 434–560 (KRVSLLLELQ…RLQCIRPLGN (127 aa)). The segment at 632-661 (LELGNDSSDDGDSNDDDVRSSSNPDTSRAT) is disordered.

In terms of assembly, probable component of the tectonic-like complex (also named MKS complex), composed of B9d1, B9d2, Cc2d2a, Mks1 and tctn. Expressed in chordotonal neurons in the antennae (at protein level). Expressed in spermatids (at protein level).

It is found in the cytoplasm. The protein localises to the cytoskeleton. The protein resides in the cilium basal body. Its subcellular location is the microtubule organizing center. It localises to the centrosome. It is found in the centriole. Its function is as follows. Probable component of the tectonic-like complex (also named MKS complex), a complex localized at the transition zone of primary cilia. Required for ciliary structure and function. The polypeptide is Tectonic-like complex member Mks1 (Drosophila melanogaster (Fruit fly)).